A 91-amino-acid polypeptide reads, in one-letter code: Small ribosomal subunit protein uS15 (91 aa).

Belongs to the universal ribosomal protein uS15 family. Part of the 30S ribosomal subunit. Forms a bridge to the 50S subunit in the 70S ribosome, contacting the 23S rRNA.

Its function is as follows. One of the primary rRNA binding proteins, it binds directly to 16S rRNA where it helps nucleate assembly of the platform of the 30S subunit by binding and bridging several RNA helices of the 16S rRNA. Forms an intersubunit bridge (bridge B4) with the 23S rRNA of the 50S subunit in the ribosome. In Legionella pneumophila (strain Corby), this protein is Small ribosomal subunit protein uS15.